The sequence spans 908 residues: NADH-quinone oxidoreductase subunit G (908 aa).

In terms of domain architecture, 2Fe-2S ferredoxin-type spans 2–83; sequence ATIHVDGKEY…GTFISIDDEE (82 aa). The [2Fe-2S] cluster site is built by Cys34, Cys45, Cys48, and Cys67. The 40-residue stretch at 83–122 folds into the 4Fe-4S His(Cys)3-ligated-type domain; that stretch reads EAKQFRESVVEWLMTNHPHDCPVCEEGGNCHLQDMTVMTG. Residues His99, Cys103, Cys106, Cys112, Cys151, Cys154, Cys157, Cys201, Cys228, Cys231, Cys235, and Cys263 each coordinate [4Fe-4S] cluster. A 4Fe-4S Mo/W bis-MGD-type domain is found at 221-277; that stretch reads MQFAPSICQQCSIGCNISPGERYGELRRIENRYNGTVNHYFLCDRGRFGYGYVNLKD.

This sequence belongs to the complex I 75 kDa subunit family. In terms of assembly, composed of 13 different subunits. Subunits NuoCD, E, F, and G constitute the peripheral sector of the complex. It depends on [2Fe-2S] cluster as a cofactor. [4Fe-4S] cluster serves as cofactor.

The catalysed reaction is a quinone + NADH + 5 H(+)(in) = a quinol + NAD(+) + 4 H(+)(out). In terms of biological role, NDH-1 shuttles electrons from NADH, via FMN and iron-sulfur (Fe-S) centers, to quinones in the respiratory chain. The immediate electron acceptor for the enzyme in this species is believed to be ubiquinone. Couples the redox reaction to proton translocation (for every two electrons transferred, four hydrogen ions are translocated across the cytoplasmic membrane), and thus conserves the redox energy in a proton gradient. The protein is NADH-quinone oxidoreductase subunit G (nuoG) of Shigella flexneri.